Consider the following 376-residue polypeptide: Alcohol dehydrogenase class-3 (376 aa).

Residues Cys-47, His-69, Cys-99, Cys-102, Cys-105, Cys-113, and Cys-176 each coordinate Zn(2+).

This sequence belongs to the zinc-containing alcohol dehydrogenase family. Class-III subfamily. As to quaternary structure, homodimer. Zn(2+) is required as a cofactor. As to expression, expressed in the skeletal muscle, heart, gill filaments and liver, with highest levels in the kidney.

It is found in the cytoplasm. It carries out the reaction a primary alcohol + NAD(+) = an aldehyde + NADH + H(+). The enzyme catalyses a secondary alcohol + NAD(+) = a ketone + NADH + H(+). The catalysed reaction is S-(hydroxymethyl)glutathione + NADP(+) = S-formylglutathione + NADPH + H(+). It catalyses the reaction S-(hydroxymethyl)glutathione + NAD(+) = S-formylglutathione + NADH + H(+). It carries out the reaction S-nitrosoglutathione + NADH + H(+) = S-(hydroxysulfenamide)glutathione + NAD(+). Its function is as follows. Class-III ADH is remarkably ineffective in oxidizing ethanol, but it readily catalyzes the oxidation of long-chain primary alcohols and the oxidation of S-(hydroxymethyl) glutathione. Also acts as a S-nitroso-glutathione reductase by catalyzing the NADH-dependent reduction of S-nitrosoglutathione, thereby regulating protein S-nitrosylation. This is Alcohol dehydrogenase class-3 from Sparus aurata (Gilthead sea bream).